Reading from the N-terminus, the 202-residue chain is Imidazoleglycerol-phosphate dehydratase (202 aa).

It belongs to the imidazoleglycerol-phosphate dehydratase family.

The protein localises to the cytoplasm. It carries out the reaction D-erythro-1-(imidazol-4-yl)glycerol 3-phosphate = 3-(imidazol-4-yl)-2-oxopropyl phosphate + H2O. Its pathway is amino-acid biosynthesis; L-histidine biosynthesis; L-histidine from 5-phospho-alpha-D-ribose 1-diphosphate: step 6/9. The polypeptide is Imidazoleglycerol-phosphate dehydratase (Rhodopirellula baltica (strain DSM 10527 / NCIMB 13988 / SH1)).